A 241-amino-acid chain; its full sequence is Ribonuclease PH (241 aa).

Phosphate-binding positions include Arg90 and 128 to 130 (GTR).

It belongs to the RNase PH family. Homohexameric ring arranged as a trimer of dimers.

It catalyses the reaction tRNA(n+1) + phosphate = tRNA(n) + a ribonucleoside 5'-diphosphate. Its function is as follows. Phosphorolytic 3'-5' exoribonuclease that plays an important role in tRNA 3'-end maturation. Removes nucleotide residues following the 3'-CCA terminus of tRNAs; can also add nucleotides to the ends of RNA molecules by using nucleoside diphosphates as substrates, but this may not be physiologically important. Probably plays a role in initiation of 16S rRNA degradation (leading to ribosome degradation) during starvation. The protein is Ribonuclease PH of Corynebacterium diphtheriae (strain ATCC 700971 / NCTC 13129 / Biotype gravis).